The sequence spans 163 residues: Transcriptional repressor NrdR (163 aa).

The segment at 3–34 is a zinc-finger region; the sequence is CPKCNYLKSSVVDSRQAEEGNTIRRRRECENC. In terms of domain architecture, ATP-cone spans 49 to 139; that stretch reads LLVVKKDGTR…VYRSFKDVDE (91 aa).

This sequence belongs to the NrdR family. It depends on Zn(2+) as a cofactor.

In terms of biological role, negatively regulates transcription of bacterial ribonucleotide reductase nrd genes and operons by binding to NrdR-boxes. The polypeptide is Transcriptional repressor NrdR (Streptococcus mutans serotype c (strain ATCC 700610 / UA159)).